The chain runs to 208 residues: Na(+)-translocating NADH-quinone reductase subunit D (208 aa).

Helical transmembrane passes span 42–62 (IVMG…ISLV), 72–92 (IIVQ…LLQA), 103–123 (VFVG…AFAM), 131–151 (LIDG…VATV), and 178–198 (NGLF…IWGL).

It belongs to the NqrDE/RnfAE family. In terms of assembly, composed of six subunits; NqrA, NqrB, NqrC, NqrD, NqrE and NqrF.

It is found in the cell inner membrane. It catalyses the reaction a ubiquinone + n Na(+)(in) + NADH + H(+) = a ubiquinol + n Na(+)(out) + NAD(+). Functionally, NQR complex catalyzes the reduction of ubiquinone-1 to ubiquinol by two successive reactions, coupled with the transport of Na(+) ions from the cytoplasm to the periplasm. NqrA to NqrE are probably involved in the second step, the conversion of ubisemiquinone to ubiquinol. The chain is Na(+)-translocating NADH-quinone reductase subunit D from Neisseria gonorrhoeae (strain ATCC 700825 / FA 1090).